A 311-amino-acid polypeptide reads, in one-letter code: uncharacterized protein (311 aa).

This is an uncharacterized protein from Bacillus subtilis (strain 168).